The sequence spans 433 residues: Probable M18 family aminopeptidase 2 (433 aa).

The Zn(2+) site is built by histidine 84, histidine 161, and histidine 409.

It belongs to the peptidase M18 family. It depends on Zn(2+) as a cofactor.

The chain is Probable M18 family aminopeptidase 2 (apeB) from Clostridium acetobutylicum (strain ATCC 824 / DSM 792 / JCM 1419 / IAM 19013 / LMG 5710 / NBRC 13948 / NRRL B-527 / VKM B-1787 / 2291 / W).